The following is a 670-amino-acid chain: Leucine zipper putative tumor suppressor 2 (670 aa).

Disordered regions lie at residues 1 to 52 (MAIV…GVPG), 92 to 131 (NEDF…IPVS), and 150 to 323 (PVLP…PSDE). The tract at residues 1 to 333 (MAIVQTLPVP…ALLHCVLEGK (333 aa)) is required for centrosomal localization. Positions 187–199 (ASSSSSSSSSSAA) are enriched in low complexity. Over residues 213–233 (PSGTLSDSGRNSLSSLPTYST) the composition is skewed to polar residues. 2 stretches are compositionally biased toward low complexity: residues 242–251 (SPGGHLPSHG) and 260–310 (PARG…GGDR). A phosphoserine mark is found at S249 and S296. Residues 311-321 (SPPPPPPPPPS) show a composition bias toward pro residues. The stretch at 329–650 (VLEGKLRDRE…LELEARELAD (322 aa)) forms a coiled coil. Positions 448-670 (SGEISLLKQQ…CLEEITATEI (223 aa)) are sufficient for interaction with CTNNB1. The sufficient for interaction with KATNB1 and for inhibition of katanin-mediated microtubule severing stretch occupies residues 451–670 (ISLLKQQLKE…CLEEITATEI (220 aa)). S571 carries the post-translational modification Phosphoserine. The Nuclear export signal motif lies at 632 to 641 (LEQELQQLSL).

It belongs to the LZTS2 family. As to quaternary structure, interacts with CTNNB1. Interacts with KATNB1. Also interacts with gamma-tubulin and KIF23.

It is found in the cytoplasm. Its subcellular location is the cytoskeleton. The protein localises to the microtubule organizing center. It localises to the centrosome. Its function is as follows. Negative regulator of katanin-mediated microtubule severing and release from the centrosome. Required for central spindle formation and the completion of cytokinesis. May negatively regulate axonal outgrowth by preventing the formation of microtubule bundles that are necessary for transport within the elongating axon. Negative regulator of the Wnt signaling pathway. Represses beta-catenin-mediated transcriptional activation by promoting the nuclear exclusion of beta-catenin. This chain is Leucine zipper putative tumor suppressor 2 (Lzts2), found in Rattus norvegicus (Rat).